The following is a 441-amino-acid chain: Plasmepsin VI (441 aa).

The Cytoplasmic segment spans residues 1-7; the sequence is MTNFCIK. The helical; Signal-anchor for type II membrane protein transmembrane segment at 8–28 threads the bilayer; the sequence is SYLFLYLSFLLFFDIITIFHV. Residues 29–441 lie on the Extracellular side of the membrane; the sequence is SSIRISTVLK…VGVVKSNHNF (413 aa). Residues 109–435 form the Peptidase A1 domain; it reads FIGDIEIGNP…DNDHKLVGVV (327 aa). Active-site residues include D127 and D324.

Belongs to the peptidase A1 family.

The protein resides in the membrane. Functionally, during the development in the mosquito midgut, plays a role in sporozoite egress from oocysts. This chain is Plasmepsin VI, found in Plasmodium berghei (strain Anka).